Here is an 873-residue protein sequence, read N- to C-terminus: Zinc fingers and homeoboxes protein 1 (873 aa).

The interval 1-63 is disordered; sequence MASRRKSTTP…ESVDSDNQQN (63 aa). Over residues 18–30 the composition is skewed to acidic residues; the sequence is QDPDLELISDLEE. At threonine 36 the chain carries Phosphothreonine. Serine 45, serine 47, and serine 48 each carry phosphoserine. C2H2-type zinc fingers lie at residues 70-93 and 102-125; these read YECK…DSEH and YVCV…LKYH. Lysine 159 is covalently cross-linked (Glycyl lysine isopeptide (Lys-Gly) (interchain with G-Cter in SUMO2)). Residues 198–247 form a disordered region; the sequence is VHHNSAEGTSEEKENGVKASREENAENTSSSASESNTSTSTVNQVHPSPA. Serine 202 is modified (phosphoserine). The span at 207–221 shows a compositional bias: basic and acidic residues; it reads SEEKENGVKASREEN. Over residues 223 to 238 the composition is skewed to low complexity; the sequence is ENTSSSASESNTSTST. Positions 272-432 are required for dimerization; the sequence is NSNLVPKVLI…QTNVQKSQVP (161 aa). The interval 272–564 is required for interaction with NFYA; that stretch reads NSNLVPKVLI…SQPKQSWNPF (293 aa). Residues 284–346 constitute a DNA-binding region (homeobox 1); that stretch reads NSIPTYNAAL…LKHGVSWTPE (63 aa). The segment at 430–455 is disordered; that stretch reads QVPAAQPAAETKPATAAVPSSPSVRP. Glycyl lysine isopeptide (Lys-Gly) (interchain with G-Cter in SUMO2) cross-links involve residues lysine 441 and lysine 485. Positions 464–526 form a DNA-binding region, homeobox 2; it reads SFGIRAKKTK…YNQRNSKSNQ (63 aa). 3 disordered regions span residues 540 to 568, 627 to 664, and 731 to 767; these read IDSS…PDFA, DEKV…TGKI, and SSSL…KRMN. Positions 551–560 are enriched in low complexity; it reads AAAASQPKQS. A DNA-binding region (homeobox 3) is located at residues 569-631; the sequence is PQKFKEKTAE…TKALKDEKVE (63 aa). Lysine 629 participates in a covalent cross-link: Glycyl lysine isopeptide (Lys-Gly) (interchain with G-Cter in SUMO2). Serine 648 is subject to Phosphoserine. Residues 660-722 constitute a DNA-binding region (homeobox 4); that stretch reads GTGKICKKTP…YAWKNGNLKW (63 aa). Residues 734–768 form a required for nuclear localization region; that stretch reads LNGLSSLRKRGRGRPKGRGRGRPRGRPRGGKRMNT. Residues 740–764 show a composition bias toward basic residues; it reads LRKRGRGRPKGRGRGRPRGRPRGGK. Serine 774 carries the post-translational modification Phosphoserine. The homeobox 5 DNA-binding region spans 777-832; it reads KFKTGTAILKDYYLKHKFLNEQDLDELVNRSHMGYEQVREWFAERQRRSELGIELF. A disordered region spans residues 829–873; the sequence is IELFEENEEEDEVIDDQEEDEEETDDSDTWEPPRHVKRKLSKSDD. Over residues 831–857 the composition is skewed to acidic residues; it reads LFEENEEEDEVIDDQEEDEEETDDSDT. The tract at residues 831–873 is required for repressor activity; the sequence is LFEENEEEDEVIDDQEEDEEETDDSDTWEPPRHVKRKLSKSDD. Over residues 863–873 the composition is skewed to basic residues; the sequence is HVKRKLSKSDD.

The protein belongs to the ZHX family. In terms of assembly, forms homodimers. Heterodimer (via HD1 domain) with ZHX2 (via HD1 domain). Also forms a heterodimer with ZHX3 which is a prerequisite for repressor activity. Interacts with ATF7IP and NFYA. Interacts (via homeobox domains) with DNMT3B (via PWWP domain). In terms of tissue distribution, ubiquitously expressed.

Its subcellular location is the nucleus. Functionally, acts as a transcriptional repressor. Increases DNMT3B-mediated repressive transcriptional activity when DNMT3B is tethered to DNA. May link molecule between DNMT3B and other co-repressor proteins. The chain is Zinc fingers and homeoboxes protein 1 (Zhx1) from Rattus norvegicus (Rat).